Consider the following 152-residue polypeptide: MQVPVGSRLVLALAFVLVWGSSVQGYPARRARYQWVRCKPNGFFANCIEEKGPQFDLIDESNNIGPPMNNPVLMEGPSKDFISNYDDYGSGSGSGSGSGSGSGSGSGSGFLGDMEWEYQPTDESNIVYFNYKPFDRILTEQNQDQPEDDFII.

An N-terminal signal peptide occupies residues 1 to 25 (MQVPVGSRLVLALAFVLVWGSSVQG). Residues 26–74 (YPARRARYQWVRCKPNGFFANCIEEKGPQFDLIDESNNIGPPMNNPVLM) constitute a propeptide, activation peptide. Cys38 and Cys47 are oxidised to a cystine. The disordered stretch occupies residues 66-115 (PPMNNPVLMEGPSKDFISNYDDYGSGSGSGSGSGSGSGSGSGSGFLGDME). 10 tandem repeats follow at residues 89 to 90 (GS), 91 to 92 (GS), 93 to 94 (GS), 95 to 96 (GS), 97 to 98 (GS), 99 to 100 (GS), 101 to 102 (GS), 103 to 104 (GS), 105 to 106 (GS), and 107 to 108 (GS). The interval 89–108 (GSGSGSGSGSGSGSGSGSGS) is 10 X 2 AA tandem repeats of G-S. Gly residues predominate over residues 90 to 110 (SGSGSGSGSGSGSGSGSGSGF). Ser92 and Ser94 each carry an O-linked (Xyl...) (glycosaminoglycan) serine glycan. O-linked (Xyl...) (glycosaminoglycan) serine glycans are attached at residues Ser98, Ser100, Ser102, Ser104, Ser106, and Ser108.

This sequence belongs to the serglycin family. Binds to activated CD44 and to GZMB. O-glycosylated; contains chondroitin sulfate and heparan sulfate.

The protein resides in the cytoplasmic granule. It is found in the cytolytic granule. Its subcellular location is the secreted. It localises to the extracellular space. The protein localises to the golgi apparatus. Plays a role in formation of mast cell secretory granules and mediates storage of various compounds in secretory vesicles. Required for storage of some proteases in both connective tissue and mucosal mast cells and for storage of granzyme B in T-lymphocytes. Plays a role in localizing neutrophil elastase in azurophil granules of neutrophils. Mediates processing of MMP2. Plays a role in cytotoxic cell granule-mediated apoptosis by forming a complex with granzyme B which is delivered to cells by perforin to induce apoptosis. Regulates the secretion of TNF-alpha and may also regulate protease secretion. Inhibits bone mineralization. This Mus musculus (Mouse) protein is Serglycin (Srgn).